The following is a 734-amino-acid chain: Photosystem I P700 chlorophyll a apoprotein A2 (734 aa).

Helical transmembrane passes span 46 to 69 (IFAS…FHVA), 135 to 158 (LYTG…LHLQ), 175 to 199 (LNHH…HVAI), 273 to 291 (IAHH…GHMY), 330 to 353 (IHFQ…QHMY), 369 to 395 (AALY…IFFI), 417 to 439 (AIIS…LYVH), and 517 to 535 (FLVH…LILV). 2 residues coordinate [4Fe-4S] cluster: Cys559 and Cys568. The next 2 membrane-spanning stretches (helical) occupy residues 575–596 (AFYL…YWHW) and 643–665 (LSVW…MFLI). Chlorophyll a-binding residues include His654, Met662, and Tyr670. Residue Trp671 coordinates phylloquinone. Residues 707 to 727 (LVGLAHFSVGYIFTYAAFLIA) traverse the membrane as a helical segment.

Belongs to the PsaA/PsaB family. In terms of assembly, the PsaA/B heterodimer binds the P700 chlorophyll special pair and subsequent electron acceptors. PSI consists of a core antenna complex that captures photons, and an electron transfer chain that converts photonic excitation into a charge separation. The eukaryotic PSI reaction center is composed of at least 11 subunits. Requires P700 is a chlorophyll a/chlorophyll a' dimer, A0 is one or more chlorophyll a, A1 is one or both phylloquinones and FX is a shared 4Fe-4S iron-sulfur center. as cofactor.

It is found in the plastid. It localises to the chloroplast thylakoid membrane. It carries out the reaction reduced [plastocyanin] + hnu + oxidized [2Fe-2S]-[ferredoxin] = oxidized [plastocyanin] + reduced [2Fe-2S]-[ferredoxin]. Functionally, psaA and PsaB bind P700, the primary electron donor of photosystem I (PSI), as well as the electron acceptors A0, A1 and FX. PSI is a plastocyanin-ferredoxin oxidoreductase, converting photonic excitation into a charge separation, which transfers an electron from the donor P700 chlorophyll pair to the spectroscopically characterized acceptors A0, A1, FX, FA and FB in turn. Oxidized P700 is reduced on the lumenal side of the thylakoid membrane by plastocyanin. This is Photosystem I P700 chlorophyll a apoprotein A2 from Dioscorea elephantipes (Elephant's foot yam).